We begin with the raw amino-acid sequence, 218 residues long: Hypoxanthine-guanine phosphoribosyltransferase (218 aa).

Ala2 carries the post-translational modification N-acetylalanine. Residue Lys69 participates in GMP binding. An N6-acetyllysine modification is found at Lys103. A Glycyl lysine isopeptide (Lys-Gly) (interchain with G-Cter in SUMO1); alternate cross-link involves residue Lys115. A Glycyl lysine isopeptide (Lys-Gly) (interchain with G-Cter in SUMO2); alternate cross-link involves residue Lys115. GMP contacts are provided by residues 134-142, Lys166, 186-188, and Asp194; these read EDIIDTGKT and KFV. The active-site Proton acceptor is Asp138. The residue at position 142 (Thr142) is a Phosphothreonine. A Mg(2+)-binding site is contributed by Asp194.

The protein belongs to the purine/pyrimidine phosphoribosyltransferase family. As to quaternary structure, homotetramer. It depends on Mg(2+) as a cofactor.

It localises to the cytoplasm. The catalysed reaction is IMP + diphosphate = hypoxanthine + 5-phospho-alpha-D-ribose 1-diphosphate. It catalyses the reaction GMP + diphosphate = guanine + 5-phospho-alpha-D-ribose 1-diphosphate. It functions in the pathway purine metabolism; IMP biosynthesis via salvage pathway; IMP from hypoxanthine: step 1/1. Functionally, converts guanine to guanosine monophosphate, and hypoxanthine to inosine monophosphate. Transfers the 5-phosphoribosyl group from 5-phosphoribosylpyrophosphate onto the purine. Plays a central role in the generation of purine nucleotides through the purine salvage pathway. The polypeptide is Hypoxanthine-guanine phosphoribosyltransferase (HPRT1) (Bos taurus (Bovine)).